A 334-amino-acid chain; its full sequence is RNA 3'-terminal phosphate cyclase (334 aa).

279–282 (HMGD) provides a ligand contact to ATP. His-303 serves as the catalytic Tele-AMP-histidine intermediate.

This sequence belongs to the RNA 3'-terminal cyclase family. Type 1 subfamily.

The protein resides in the cytoplasm. It catalyses the reaction a 3'-end 3'-phospho-ribonucleotide-RNA + ATP = a 3'-end 2',3'-cyclophospho-ribonucleotide-RNA + AMP + diphosphate. Catalyzes the conversion of 3'-phosphate to a 2',3'-cyclic phosphodiester at the end of RNA. The mechanism of action of the enzyme occurs in 3 steps: (A) adenylation of the enzyme by ATP; (B) transfer of adenylate to an RNA-N3'P to produce RNA-N3'PP5'A; (C) and attack of the adjacent 2'-hydroxyl on the 3'-phosphorus in the diester linkage to produce the cyclic end product. The biological role of this enzyme is unknown but it is likely to function in some aspects of cellular RNA processing. This chain is RNA 3'-terminal phosphate cyclase, found in Metallosphaera sedula (strain ATCC 51363 / DSM 5348 / JCM 9185 / NBRC 15509 / TH2).